We begin with the raw amino-acid sequence, 64 residues long: Large ribosomal subunit protein bL35 (64 aa).

Positions 1–64 (MPKNKTNSGA…RKSIKKLLGK (64 aa)) are disordered.

This sequence belongs to the bacterial ribosomal protein bL35 family.

The sequence is that of Large ribosomal subunit protein bL35 from Beutenbergia cavernae (strain ATCC BAA-8 / DSM 12333 / CCUG 43141 / JCM 11478 / NBRC 16432 / NCIMB 13614 / HKI 0122).